An 82-amino-acid polypeptide reads, in one-letter code: Small ribosomal subunit protein bS20 (82 aa).

Belongs to the bacterial ribosomal protein bS20 family.

Binds directly to 16S ribosomal RNA. The protein is Small ribosomal subunit protein bS20 of Lysinibacillus sphaericus (strain C3-41).